Reading from the N-terminus, the 695-residue chain is Elongation factor G (695 aa).

The tr-type G domain maps to 12 to 286; the sequence is DKLRNIGIMA…AVIDYLPSPL (275 aa). Residues 21 to 28, 85 to 89, and 139 to 142 contribute to the GTP site; these read AHIDAGKT, DTPGH, and NKMD.

It belongs to the TRAFAC class translation factor GTPase superfamily. Classic translation factor GTPase family. EF-G/EF-2 subfamily.

The protein localises to the cytoplasm. Its function is as follows. Catalyzes the GTP-dependent ribosomal translocation step during translation elongation. During this step, the ribosome changes from the pre-translocational (PRE) to the post-translocational (POST) state as the newly formed A-site-bound peptidyl-tRNA and P-site-bound deacylated tRNA move to the P and E sites, respectively. Catalyzes the coordinated movement of the two tRNA molecules, the mRNA and conformational changes in the ribosome. The protein is Elongation factor G of Thermotoga petrophila (strain ATCC BAA-488 / DSM 13995 / JCM 10881 / RKU-1).